A 202-amino-acid polypeptide reads, in one-letter code: FMN-dependent NADH:quinone oxidoreductase 2 (202 aa).

Residues Ser-9, 15 to 17, and 95 to 98 each bind FMN; these read SAS and MWNL.

Belongs to the azoreductase type 1 family. Homodimer. FMN serves as cofactor.

The catalysed reaction is 2 a quinone + NADH + H(+) = 2 a 1,4-benzosemiquinone + NAD(+). It catalyses the reaction N,N-dimethyl-1,4-phenylenediamine + anthranilate + 2 NAD(+) = 2-(4-dimethylaminophenyl)diazenylbenzoate + 2 NADH + 2 H(+). Quinone reductase that provides resistance to thiol-specific stress caused by electrophilic quinones. Functionally, also exhibits azoreductase activity. Catalyzes the reductive cleavage of the azo bond in aromatic azo compounds to the corresponding amines. The protein is FMN-dependent NADH:quinone oxidoreductase 2 of Hahella chejuensis (strain KCTC 2396).